A 369-amino-acid chain; its full sequence is Glutamine synthetase 2 cytoplasmic (369 aa).

Residues 32 to 112 (VQATYVWIDG…VMCDTYKFDG (81 aa)) enclose the GS beta-grasp domain. Residues 119 to 369 (KRKTCLEVAN…AILRTICLDE (251 aa)) form the GS catalytic domain.

The protein belongs to the glutamine synthetase family. Homooctamer.

Its subcellular location is the cytoplasm. It carries out the reaction L-glutamate + NH4(+) + ATP = L-glutamine + ADP + phosphate + H(+). The polypeptide is Glutamine synthetase 2 cytoplasmic (Gs2) (Drosophila melanogaster (Fruit fly)).